A 108-amino-acid chain; its full sequence is Urease subunit beta (108 aa).

It belongs to the urease beta subunit family. In terms of assembly, probable heterotrimer of UreA (gamma), UreB (beta) and UreC (alpha) subunits. Three heterotrimers associate to form the active enzyme. The trimeric urease interacts with an accessory complex composed of UreD, UreF and UreG, which is required for the assembly of the nickel containing metallocenter of UreC. The UreE protein may also play a direct role in nickel transfer to the urease apoprotein.

The protein localises to the cytoplasm. The enzyme catalyses urea + 2 H2O + H(+) = hydrogencarbonate + 2 NH4(+). It participates in nitrogen metabolism; urea degradation; CO(2) and NH(3) from urea (urease route): step 1/1. The sequence is that of Urease subunit beta from Proteus mirabilis (strain HI4320).